A 568-amino-acid polypeptide reads, in one-letter code: AP2-like ethylene-responsive transcription factor PLT2 (568 aa).

Residues 151–171 (ASPAETSADNSSSTTNTSGGA) are compositionally biased toward low complexity. The interval 151–173 (ASPAETSADNSSSTTNTSGGAIV) is disordered. 2 consecutive DNA-binding regions (AP2/ERF) follow at residues 190–256 (IYRG…TNFP) and 292–350 (MYRG…TNFE). Positions 548-568 (WNSGESAQGSNPGGVFTMWNE) are disordered.

The protein belongs to the AP2/ERF transcription factor family. AP2 subfamily. Post-translationally, stabilized in root meristems by reactive oxygen species (ROS) mediated oxidative post-translational modification triggered by RGF1 hormone peptide in a RITF1-dependent manner. Expressed in roots, seedlings, flowers, and siliques. Also detected at low levels in leaves. In roots, specifically detected in the distal root meristem, including the QC. This tissue specificity is regulated by auxin gradient and depends on PIN proteins.

The protein resides in the nucleus. Probably acts as a transcriptional activator. Binds to the GCC-box pathogenesis-related promoter element. May be involved in the regulation of gene expression by stress factors and by components of stress signal transduction pathways. Master regulator of basal/root fate. Essential for root quiescent center (QC) and columella specification, stem cell activity, as well as for establishment of the stem cell niche during embryogenesis. Modulates the root polar auxin transport by regulating the distribution of PIN genes. Essential role in respecifying pattern and polarity in damaged roots. Direct target of the transcriptional corepressor TPL. Expression levels and patterns regulated post-transcriptionally by root meristem growth factors (RGFs). In Arabidopsis thaliana (Mouse-ear cress), this protein is AP2-like ethylene-responsive transcription factor PLT2.